The following is a 447-amino-acid chain: Phosphoglucosamine mutase (447 aa).

The active-site Phosphoserine intermediate is S104. S104, D243, D245, and D247 together coordinate Mg(2+). The residue at position 104 (S104) is a Phosphoserine.

Belongs to the phosphohexose mutase family. It depends on Mg(2+) as a cofactor. Post-translationally, activated by phosphorylation.

The catalysed reaction is alpha-D-glucosamine 1-phosphate = D-glucosamine 6-phosphate. Functionally, catalyzes the conversion of glucosamine-6-phosphate to glucosamine-1-phosphate. The sequence is that of Phosphoglucosamine mutase from Corynebacterium aurimucosum (strain ATCC 700975 / DSM 44827 / CIP 107346 / CN-1) (Corynebacterium nigricans).